The chain runs to 221 residues: Cysteine-rich venom protein (221 aa).

Residue Gly-1 is a signal peptide. The SCP domain occupies 21–148; the sequence is DLHNSLRRSV…EYKYFYVCQY (128 aa). 8 disulfides stabilise this stretch: Cys-57/Cys-135, Cys-74/Cys-149, Cys-130/Cys-146, Cys-168/Cys-175, Cys-171/Cys-180, Cys-184/Cys-216, Cys-193/Cys-210, and Cys-201/Cys-214. In terms of domain architecture, ShKT spans 184–216; it reads CTHEDKFTNCKDLVKQGCNNNYLKTNCPASCSC.

It belongs to the CRISP family. In terms of tissue distribution, expressed by the venom gland.

It is found in the secreted. In terms of biological role, blocks contraction of smooth muscle elicited by high potassium-induced depolarization, but does not block caffeine-stimulated contraction. May target voltage-gated calcium channels in smooth muscle. The polypeptide is Cysteine-rich venom protein (Vipera nikolskii (Nikolsky's adder)).